A 216-amino-acid chain; its full sequence is ATP-dependent Clp protease proteolytic subunit 3 (216 aa).

Residue serine 120 is the Nucleophile of the active site. Histidine 145 is an active-site residue.

This sequence belongs to the peptidase S14 family. In terms of assembly, fourteen ClpP subunits assemble into 2 heptameric rings which stack back to back to give a disk-like structure with a central cavity, resembling the structure of eukaryotic proteasomes.

Its subcellular location is the cytoplasm. It catalyses the reaction Hydrolysis of proteins to small peptides in the presence of ATP and magnesium. alpha-casein is the usual test substrate. In the absence of ATP, only oligopeptides shorter than five residues are hydrolyzed (such as succinyl-Leu-Tyr-|-NHMec, and Leu-Tyr-Leu-|-Tyr-Trp, in which cleavage of the -Tyr-|-Leu- and -Tyr-|-Trp bonds also occurs).. Functionally, cleaves peptides in various proteins in a process that requires ATP hydrolysis. Has a chymotrypsin-like activity. Plays a major role in the degradation of misfolded proteins. This Prochlorococcus marinus (strain SARG / CCMP1375 / SS120) protein is ATP-dependent Clp protease proteolytic subunit 3.